The primary structure comprises 430 residues: MQRVQSAVDFSNLLNPSESTAEKRDHSGSPRQQTAQPQQQQQQPQPEADMATVGLLRPNGPLPGAQATEPANELPRPYKCPLCDKAFHRLEHQTRHIRTHTGEKPHACQFPGCSKKFSRSDELTRHSRIHSNPNSRRGNKGQQQQQHPLVHNHGLQPDMMPPPGPKAIRSAPPTAMSSPNVSPPHSYSPYNFAPSGLNPYSHSRSSAGSQSGPDISLLARAAGQVERDGAAHHHFQPRFQFYGNTLHAATASRNQLPGLQAYHMSRSHSHEDHDDHYGQSYRHAKRSRPNSPNSTAPSSPTFSHDSLSPTPDHTPLATPAHSPRLRPHPGLELPPFRNLSLGQQHTTPALAPLEPALDGQFSLPQTPPAAPRSSGMSLTDIISRPDGTQRKLPVPKVAVQDLLGPADGFNPSVRNSSSTSLSGAEMMDRL.

The span at 1 to 19 (MQRVQSAVDFSNLLNPSES) shows a compositional bias: polar residues. Disordered regions lie at residues 1-77 (MQRV…LPRP), 97-187 (IRTH…PHSY), 265-340 (SRSH…RNLS), and 357-430 (LDGQ…MDRL). Positions 30-46 (PRQQTAQPQQQQQQPQP) are enriched in low complexity. C2H2-type zinc fingers lie at residues 78-100 (YKCP…IRTH) and 106-130 (HACQ…SRIH). Basic and acidic residues predominate over residues 97 to 106 (IRTHTGEKPH). 2 stretches are compositionally biased toward polar residues: residues 130 to 147 (HSNP…QQQH) and 175 to 187 (AMSS…PHSY). Over residues 268–277 (HSHEDHDDHY) the composition is skewed to basic and acidic residues. Low complexity predominate over residues 289–303 (PNSPNSTAPSSPTFS). Over residues 412-422 (SVRNSSSTSLS) the composition is skewed to polar residues.

The protein belongs to the creA/MIG C2H2-type zinc-finger protein family.

It localises to the nucleus. Its function is as follows. Involved in carbon catabolite repression. Represses the transcription of a number of genes by binding to a GC-rich region in their promoter. The chain is DNA-binding protein cre-1 (cre-1) from Neurospora crassa (strain ATCC 24698 / 74-OR23-1A / CBS 708.71 / DSM 1257 / FGSC 987).